The primary structure comprises 375 residues: Queuine tRNA-ribosyltransferase (375 aa).

The active-site Proton acceptor is Asp90. Residues Asp90 to Phe94, Asp144, Gln190, and Gly217 each bind substrate. The interval Gly248 to Tyr254 is RNA binding. Asp267 (nucleophile) is an active-site residue. The tract at residues Thr272–Arg276 is RNA binding; important for wobble base 34 recognition. The Zn(2+) site is built by Cys305, Cys307, Cys310, and His336.

It belongs to the queuine tRNA-ribosyltransferase family. In terms of assembly, homodimer. Within each dimer, one monomer is responsible for RNA recognition and catalysis, while the other monomer binds to the replacement base PreQ1. The cofactor is Zn(2+).

The enzyme catalyses 7-aminomethyl-7-carbaguanine + guanosine(34) in tRNA = 7-aminomethyl-7-carbaguanosine(34) in tRNA + guanine. It participates in tRNA modification; tRNA-queuosine biosynthesis. In terms of biological role, catalyzes the base-exchange of a guanine (G) residue with the queuine precursor 7-aminomethyl-7-deazaguanine (PreQ1) at position 34 (anticodon wobble position) in tRNAs with GU(N) anticodons (tRNA-Asp, -Asn, -His and -Tyr). Catalysis occurs through a double-displacement mechanism. The nucleophile active site attacks the C1' of nucleotide 34 to detach the guanine base from the RNA, forming a covalent enzyme-RNA intermediate. The proton acceptor active site deprotonates the incoming PreQ1, allowing a nucleophilic attack on the C1' of the ribose to form the product. After dissociation, two additional enzymatic reactions on the tRNA convert PreQ1 to queuine (Q), resulting in the hypermodified nucleoside queuosine (7-(((4,5-cis-dihydroxy-2-cyclopenten-1-yl)amino)methyl)-7-deazaguanosine). This Borrelia duttonii (strain Ly) protein is Queuine tRNA-ribosyltransferase.